The following is a 430-amino-acid chain: Histidinol dehydrogenase (430 aa).

Residues Y131, Q192, and N215 each coordinate NAD(+). Residues S238, Q260, and H263 each contribute to the substrate site. Zn(2+)-binding residues include Q260 and H263. Residues E328 and H329 each act as proton acceptor in the active site. Residues H329, D362, E416, and H421 each contribute to the substrate site. Residue D362 coordinates Zn(2+). H421 serves as a coordination point for Zn(2+).

Belongs to the histidinol dehydrogenase family. Zn(2+) serves as cofactor.

The catalysed reaction is L-histidinol + 2 NAD(+) + H2O = L-histidine + 2 NADH + 3 H(+). It participates in amino-acid biosynthesis; L-histidine biosynthesis; L-histidine from 5-phospho-alpha-D-ribose 1-diphosphate: step 9/9. Catalyzes the sequential NAD-dependent oxidations of L-histidinol to L-histidinaldehyde and then to L-histidine. The polypeptide is Histidinol dehydrogenase (Acinetobacter baylyi (strain ATCC 33305 / BD413 / ADP1)).